The sequence spans 145 residues: Large ribosomal subunit protein uL15 (145 aa).

A disordered region spans residues 1–55 (MSLLKTLAPKAGSKHAPKRIGRGIGSGMGGTATKGHKGQLARTGGTVRRGFEGGQ). Residues 12 to 21 (GSKHAPKRIG) show a composition bias toward basic residues. Over residues 22 to 32 (RGIGSGMGGTA) the composition is skewed to gly residues.

The protein belongs to the universal ribosomal protein uL15 family. Part of the 50S ribosomal subunit.

Binds to the 23S rRNA. The polypeptide is Large ribosomal subunit protein uL15 (Bdellovibrio bacteriovorus (strain ATCC 15356 / DSM 50701 / NCIMB 9529 / HD100)).